The following is a 528-amino-acid chain: Facilitator of iron transport 1 (528 aa).

The signal sequence occupies residues 1-18 (MKLSSAFVLSAITVAALG). A run of 3 repeats spans residues 20-98 (SITT…GSGS), 99-168 (SITT…GSGS), and 169-233 (SITT…GSGS). Positions 20-274 (SITTTITATK…ERAPASTVAT (255 aa)) are 4 X approximate tandem repeats. Disordered stretches follow at residues 79–100 (SIVEPSTSAQGTSADEGSGSSI), 145–172 (AAETSVAEPSTSAQGTSADEGSGSSITT), and 214–234 (ASPVTSVAEPSASTDEGSGSS). Polar residues-rich tracts occupy residues 81–93 (VEPSTSAQGTSAD) and 145–163 (AAETSVAEPSTSAQGTSAD). Residues 234-274 (SITTTITATKNGHVYTKTVTQDATFVWTGEGERAPASTVAT) form a 1-4; truncated repeat. Repeat copies occupy residues 289–294 (SIVEAS), 295–300 (SAVETS), 301–306 (SAAETS), 307–312 (SAVETS), 313–318 (SAVETS), 319–324 (SAVETS), 325–330 (SAAETS), 331–336 (SAAETS), 337–342 (SAVETS), 343–348 (SAVEIS), 349–353 (SAVET), and 354–359 (SAVETS). A 12 X 6 AA approximate tandem repeats, Ser/Thr-rich region spans residues 289-359 (SIVEASSAVE…AVETSAVETS (71 aa)). Low complexity-rich tracts occupy residues 298 to 388 (ETSS…QASS) and 398 to 435 (TSSVVPTFSSTTTENSSNSKSTSAVVASTTTSSESSAT). A disordered region spans residues 298–471 (ETSSAAETSS…SNNWSSSSSA (174 aa)). N-linked (GlcNAc...) asparagine glycosylation is present at Asn-412. Residues 446 to 457 (YTESSSRDAQSV) are compositionally biased toward polar residues. Positions 462–471 (SNNWSSSSSA) are enriched in low complexity. A glycan (N-linked (GlcNAc...) asparagine) is linked at Asn-464. An ATP-binding site is contributed by 488-495 (GIFTNGKS). N-linked (GlcNAc...) asparagine glycosylation occurs at Asn-503. A lipid anchor (GPI-anchor amidated glycine) is attached at Gly-506. Residues 507 to 528 (AADSIAAGTGLMGAALAAVIFL) constitute a propeptide, removed in mature form.

The GPI-anchor is attached to the protein in the endoplasmic reticulum and serves to target the protein to the cell surface. There, the glucosamine-inositol phospholipid moiety is cleaved off and the GPI-modified mannoprotein is covalently attached via its lipidless GPI glycan remnant to the 1,6-beta-glucan of the outer cell wall layer.

It localises to the secreted. It is found in the cell wall. The protein resides in the membrane. Involved in the uptake of non-siderophore sources of iron and the siderophores ferrioxamine B and ferrichrome. Has a role in the retention of iron in the cell wall and periplasmic space. This Saccharomyces cerevisiae (strain ATCC 204508 / S288c) (Baker's yeast) protein is Facilitator of iron transport 1 (FIT1).